A 153-amino-acid chain; its full sequence is Transcriptional repressor NrdR (153 aa).

A zinc finger lies at cysteine 3–cysteine 34. Positions isoleucine 49–threonine 139 constitute an ATP-cone domain.

This sequence belongs to the NrdR family. Requires Zn(2+) as cofactor.

In terms of biological role, negatively regulates transcription of bacterial ribonucleotide reductase nrd genes and operons by binding to NrdR-boxes. The chain is Transcriptional repressor NrdR from Caldicellulosiruptor saccharolyticus (strain ATCC 43494 / DSM 8903 / Tp8T 6331).